Consider the following 455-residue polypeptide: Kynurenine 3-monooxygenase (455 aa).

This sequence belongs to the aromatic-ring hydroxylase family. KMO subfamily. Requires FAD as cofactor.

It catalyses the reaction L-kynurenine + NADPH + O2 + H(+) = 3-hydroxy-L-kynurenine + NADP(+) + H2O. It functions in the pathway cofactor biosynthesis; NAD(+) biosynthesis; quinolinate from L-kynurenine: step 1/3. In terms of biological role, catalyzes the hydroxylation of L-kynurenine (L-Kyn) to form 3-hydroxy-L-kynurenine (L-3OHKyn). Required for synthesis of quinolinic acid. In Xanthomonas oryzae pv. oryzae (strain KACC10331 / KXO85), this protein is Kynurenine 3-monooxygenase.